We begin with the raw amino-acid sequence, 271 residues long: MASEFKKKIFWRAVVAEFLAMTLFIFISIGSALGFQYPVRNNQTSGAAQDNVKVSLAFGLSIATLAQSVGHISGAHLNPAVTLGLLLSCQISVLRAVMYIIAQCVGAIVATAILSGITSSLPGNSLGLNSLAPGVDSGQGLGIEIIGTLQLVLCVLATTDRRRRDLGGSAPLAIGFSVALGHLLAIDYTGCGINPARSFGSAVITHNFQDHWVFWVGPFIGGALAVLIYDFILAPRSSDLTDRVKVWTSGQVEEYDLDGDDINSRVEMKPK.

The Cytoplasmic portion of the chain corresponds to 1-11 (MASEFKKKIFW). Residues 12–29 (RAVVAEFLAMTLFIFISI) traverse the membrane as a helical segment. The Extracellular segment spans residues 30 to 48 (GSALGFQYPVRNNQTSGAA). The N-linked (GlcNAc...) asparagine glycan is linked to asparagine 42. Residues 49 to 67 (QDNVKVSLAFGLSIATLAQ) traverse the membrane as a helical segment. Over 68–70 (SVG) the chain is Cytoplasmic. The stretch at 71-84 (HISGAHLNPAVTLG) is an intramembrane region. The NPA 1 motif lies at 78–80 (NPA). The Cytoplasmic segment spans residues 85–92 (LLLSCQIS). Residues 93–111 (VLRAVMYIIAQCVGAIVAT) form a helical membrane-spanning segment. Residues 112–135 (AILSGITSSLPGNSLGLNSLAPGV) lie on the Extracellular side of the membrane. Residues 136–155 (DSGQGLGIEIIGTLQLVLCV) traverse the membrane as a helical segment. Residues 156–165 (LATTDRRRRD) are Cytoplasmic-facing. The helical transmembrane segment at 166-183 (LGGSAPLAIGFSVALGHL) threads the bilayer. The Extracellular portion of the chain corresponds to 184–188 (LAIDY). The stretch at 189–201 (TGCGINPARSFGS) is an intramembrane region. Residues 194-196 (NPA) carry the NPA 2 motif. Residues 202–208 (AVITHNF) are Extracellular-facing. The chain crosses the membrane as a helical span at residues 209–226 (QDHWVFWVGPFIGGALAV). The Cytoplasmic portion of the chain corresponds to 227-271 (LIYDFILAPRSSDLTDRVKVWTSGQVEEYDLDGDDINSRVEMKPK). Serine 249 carries the post-translational modification Phosphoserine. A Phosphotyrosine modification is found at tyrosine 255. Serine 264 carries the phosphoserine modification.

It belongs to the MIP/aquaporin (TC 1.A.8) family. In terms of assembly, homotetramer; each monomer provides an independent water pore. Component of the ankyrin-1 complex in the erythrocyte, composed of ANK1, RHCE, RHAG, SLC4A1, EPB42, GYPA, GYPB and AQP1. Interacts with EPHB2; involved in endolymph production in the inner ear. Identified in a complex with STOM. Interacts (via the N-terminal) with ANK1 (via ANK 1-5 repeats). Interacts (via the C-terminal) with EPB42.

It is found in the cell membrane. The catalysed reaction is H2O(in) = H2O(out). It carries out the reaction nitric oxide(out) = nitric oxide(in). The enzyme catalyses CO2(out) = CO2(in). It catalyses the reaction glycerol(in) = glycerol(out). The catalysed reaction is H2O2(out) = H2O2(in). It carries out the reaction K(+)(in) = K(+)(out). The enzyme catalyses Na(+)(in) = Na(+)(out). Forms a water channel that facilitates the transport of water across cell membranes, playing a crucial role in water homeostasis in various tissues. Could also be permeable to small solutes including hydrogen peroxide, glycerol and gases such as amonnia (NH3), nitric oxide (NO) and carbon dioxide (CO2). Recruited to the ankyrin-1 complex, a multiprotein complex of the erythrocyte membrane, it could be part of a CO2 metabolon, linking facilitated diffusion of CO2 across the membrane, anion exchange of Cl(-)/HCO3(-) and interconversion of dissolved CO2 and carbonic acid in the cytosol. In vitro, it shows non-selective gated cation channel activity and may be permeable to cations like K(+) and Na(+) in vivo. The chain is Aquaporin-1 from Sus scrofa (Pig).